The following is a 352-amino-acid chain: Phosphatase Herzog (352 aa).

Positions 1–102 (MDATSIITQV…PLPDQQRYLL (102 aa)) are prion-like domain necessary for both protein assembly and membrane targeting. The tract at residues 103–267 (PQVRLTDMHR…ELIPLFEKLS (165 aa)) is mediates substrate recognition. The FCP1 homology domain occupies 108–266 (TDMHRKCMVI…RELIPLFEKL (159 aa)). Disordered stretches follow at residues 284 to 310 (NNQT…LQQQ) and 332 to 352 (TMLN…LQKT).

Monomer. Forms higher-order protein aggregates with amyloid-like features during gastrulation. Interacts with babo, dah, Irk1, pch2, Ras64B, sax and Src64B.

It is found in the cell membrane. It carries out the reaction O-phospho-L-seryl-[protein] + H2O = L-seryl-[protein] + phosphate. Its activity is regulated as follows. Phosphatase activity requires amyloid-like aggregation on the membrane. In terms of biological role, prion-like membrane-associated phosphatase. Phosphatase activity depends on amyloid-like assembly at the membrane. Might have a role in establishment of segment polarity in embryos. The protein is Phosphatase Herzog of Drosophila melanogaster (Fruit fly).